The chain runs to 853 residues: DNA mismatch repair protein MutS (853 aa).

ATP is bound at residue Gly614 to Ser621.

Belongs to the DNA mismatch repair MutS family.

Functionally, this protein is involved in the repair of mismatches in DNA. It is possible that it carries out the mismatch recognition step. This protein has a weak ATPase activity. This chain is DNA mismatch repair protein MutS, found in Escherichia coli O127:H6 (strain E2348/69 / EPEC).